The primary structure comprises 304 residues: Bifunctional protein FolD (304 aa).

NADP(+) contacts are provided by residues G176 to S178, I201, and I242.

This sequence belongs to the tetrahydrofolate dehydrogenase/cyclohydrolase family. In terms of assembly, homodimer.

The catalysed reaction is (6R)-5,10-methylene-5,6,7,8-tetrahydrofolate + NADP(+) = (6R)-5,10-methenyltetrahydrofolate + NADPH. The enzyme catalyses (6R)-5,10-methenyltetrahydrofolate + H2O = (6R)-10-formyltetrahydrofolate + H(+). It functions in the pathway one-carbon metabolism; tetrahydrofolate interconversion. Functionally, catalyzes the oxidation of 5,10-methylenetetrahydrofolate to 5,10-methenyltetrahydrofolate and then the hydrolysis of 5,10-methenyltetrahydrofolate to 10-formyltetrahydrofolate. This is Bifunctional protein FolD from Gluconobacter oxydans (strain 621H) (Gluconobacter suboxydans).